We begin with the raw amino-acid sequence, 178 residues long: Relaxin-like protein SQ10 (178 aa).

The N-terminal stretch at 1-20 (MPALLFYLLGFCLLQGQVTG) is a signal peptide. Intrachain disulfides connect Cys-34/Cys-165, Cys-46/Cys-178, and Cys-164/Cys-169. Residues 54–150 (ESPSPENPFL…SSASESNTFS (97 aa)) constitute a propeptide, connecting peptide.

This sequence belongs to the insulin family. As to quaternary structure, heterodimer of a B chain and an A chain linked by two disulfide bonds.

It is found in the secreted. This is Relaxin-like protein SQ10 from Oryctolagus cuniculus (Rabbit).